The primary structure comprises 902 residues: Cytosolic 10-formyltetrahydrofolate dehydrogenase (902 aa).

The hydrolase domain stretch occupies residues 1–310 (MKIAVIGQSL…PASQYYKTAD (310 aa)). 88-90 (QFI) is a (6R)-10-formyltetrahydrofolate binding site. His-106 (proton donor) is an active-site residue. Asp-142 contacts (6R)-10-formyltetrahydrofolate. Residues 318–395 (DEEKKFSEEI…EFIQMVVRRL (78 aa)) form the Carrier domain. Ser-354 carries the post-translational modification O-(pantetheine 4'-phosphoryl)serine. Residues 417-902 (TVKIPHQLFI…LKTKAVTIEY (486 aa)) are aldehyde dehydrogenase domain. NADP(+)-binding positions include 571–573 (IPW), 597–600 (KPAQ), 630–635 (GSLIGQ), 650–651 (GS), and 673–674 (EL). Glu-673 functions as the Proton acceptor in the catalytic mechanism. Residue Cys-707 is the Proton donor of the active site. NADP(+)-binding positions include Lys-757 and 804-806 (ESF).

This sequence in the N-terminal section; belongs to the GART family. It in the C-terminal section; belongs to the aldehyde dehydrogenase family. ALDH1L subfamily. Homotetramer. Post-translationally, phosphopantetheinylation at Ser-354 by AASDHPPT is required for the formyltetrahydrofolate dehydrogenase activity.

It is found in the cytoplasm. Its subcellular location is the cytosol. The catalysed reaction is (6R)-10-formyltetrahydrofolate + NADP(+) + H2O = (6S)-5,6,7,8-tetrahydrofolate + CO2 + NADPH + H(+). Its function is as follows. Cytosolic 10-formyltetrahydrofolate dehydrogenase that catalyzes the NADP(+)-dependent conversion of 10-formyltetrahydrofolate to tetrahydrofolate and carbon dioxide. May also have an NADP(+)-dependent aldehyde dehydrogenase activity towards formaldehyde, acetaldehyde, propionaldehyde, and benzaldehyde. Regulates reduced folate pools as well as glycine metabolism. The chain is Cytosolic 10-formyltetrahydrofolate dehydrogenase (aldh1l1) from Xenopus tropicalis (Western clawed frog).